Here is a 47-residue protein sequence, read N- to C-terminus: Large ribosomal subunit protein bL33C (47 aa).

Belongs to the bacterial ribosomal protein bL33 family.

The chain is Large ribosomal subunit protein bL33C from Staphylococcus epidermidis (strain ATCC 35984 / DSM 28319 / BCRC 17069 / CCUG 31568 / BM 3577 / RP62A).